The chain runs to 96 residues: Protein Vpr (96 aa).

The tract at residues methionine 1–leucine 42 is homooligomerization. A phosphoserine; by host mark is found at serine 79, serine 94, and serine 96.

Belongs to the HIV-1 VPR protein family. Homooligomer, may form homodimer. Interacts with p6-gag region of the Pr55 Gag precursor protein through a (Leu-X-X)4 motif near the C-terminus of the P6gag protein. Interacts with host UNG. May interact with host RAD23A/HHR23A. Interacts with host VPRBP/DCAF1, leading to hijack the CUL4A-RBX1-DDB1-DCAF1/VPRBP complex, mediating ubiquitination of host proteins such as TERT and ZGPAT and arrest of the cell cycle in G2 phase. Post-translationally, phosphorylated on several residues by host. These phosphorylations regulate VPR activity for the nuclear import of the HIV-1 pre-integration complex.

Its subcellular location is the virion. The protein localises to the host nucleus. It is found in the host extracellular space. In terms of biological role, during virus replication, may deplete host UNG protein, and incude G2-M cell cycle arrest. Acts by targeting specific host proteins for degradation by the 26S proteasome, through association with the cellular CUL4A-DDB1 E3 ligase complex by direct interaction with host VPRPB/DCAF-1. Cell cycle arrest reportedly occurs within hours of infection and is not blocked by antiviral agents, suggesting that it is initiated by the VPR carried into the virion. Additionally, VPR induces apoptosis in a cell cycle dependent manner suggesting that these two effects are mechanistically linked. Detected in the serum and cerebrospinal fluid of AIDS patient, VPR may also induce cell death to bystander cells. Functionally, during virus entry, plays a role in the transport of the viral pre-integration (PIC) complex to the host nucleus. This function is crucial for viral infection of non-dividing macrophages. May act directly at the nuclear pore complex, by binding nucleoporins phenylalanine-glycine (FG)-repeat regions. In Homo sapiens (Human), this protein is Protein Vpr.